Here is a 235-residue protein sequence, read N- to C-terminus: MAIKLENIKIEKSWKEVLKGEFLSPYFLEIKEKLVCLKNSGVTIYPPGNLIFNAFNLTPFDKVKVVILGQDPYHEVNQAMGLSFSVPKDVRIPPSLINIFKEINSDLGINEPNCGDLTFWAKQGVLLLNASLSVSAKIANSHKNFGWQIFTDAVIKTLSQKRENIVFMLWGNFAKAKATLIDAKKHLILTAAHPSPLAGGAFFGCKHFSKCNNFLISRGISPINWDLNYTDNQPF.

The active-site Proton acceptor is the aspartate 71.

It belongs to the uracil-DNA glycosylase (UDG) superfamily. UNG family.

The protein resides in the cytoplasm. The catalysed reaction is Hydrolyzes single-stranded DNA or mismatched double-stranded DNA and polynucleotides, releasing free uracil.. Functionally, excises uracil residues from the DNA which can arise as a result of misincorporation of dUMP residues by DNA polymerase or due to deamination of cytosine. This is Uracil-DNA glycosylase from Campylobacter hominis (strain ATCC BAA-381 / DSM 21671 / CCUG 45161 / LMG 19568 / NCTC 13146 / CH001A).